A 579-amino-acid chain; its full sequence is V-type ATP synthase alpha chain (579 aa).

An ATP-binding site is contributed by 227–234; that stretch reads GGFGTGKT.

This sequence belongs to the ATPase alpha/beta chains family.

The catalysed reaction is ATP + H2O + 4 H(+)(in) = ADP + phosphate + 5 H(+)(out). In terms of biological role, produces ATP from ADP in the presence of a proton gradient across the membrane. The V-type alpha chain is a catalytic subunit. This is V-type ATP synthase alpha chain from Anaeromyxobacter dehalogenans (strain 2CP-1 / ATCC BAA-258).